The sequence spans 1372 residues: Collagen alpha-2(I) chain (1372 aa).

Positions 1-22 (MLSFVDTRTLLLLAVTSCLATC) are cleaved as a signal peptide. Glutamine 23 is modified (pyrrolidone carboxylic acid). Positions 23–85 (QSLQMGSVRK…PPGLTGNFAA (63 aa)) are cleaved as a propeptide — N-terminal propeptide. The disordered stretch occupies residues 28–1135 (GSVRKGPTGD…DQPRSQPSLR (1108 aa)). A compositionally biased stretch (pro residues) spans 59 to 77 (VGPPGPPGAPGPPGPPGPP). Glutamine 86 bears the Pyrrolidone carboxylic acid mark. Lysine 90 carries the post-translational modification Allysine. Residues 95-146 (GPGPMGLMGPRGPPGAVGAPGPQGFQGPAGEPGEPGQTGPAGSRGPAGPPGK) are compositionally biased toward low complexity. A compositionally biased stretch (basic and acidic residues) spans 147-161 (AGEDGHPGKPGRPGE). Residue lysine 183 is modified to 5-hydroxylysine; alternate. Lysine 183 carries O-linked (Gal...) hydroxylysine; alternate glycosylation. 7 stretches are compositionally biased toward low complexity: residues 231–260 (VGAP…SAGP), 285–299 (AGPR…LSGP), 306–327 (PGAN…AGAP), 336–348 (PGPV…TGPR), 390–416 (PGEP…LPGA), 476–495 (LPGI…RGEA), and 519–537 (PGLA…NGAQ). Over residues 544-553 (GVQGGKGEQG) the composition is skewed to gly residues. Low complexity predominate over residues 600 to 639 (PGESGAAGPSGPIGIRGPSGAPGPDGNKGEAGAVGAPGSA). Residues 640–649 (GASGPGGLPG) show a composition bias toward gly residues. Low complexity-rich tracts occupy residues 674–716 (NPGR…PRGS) and 725–743 (PAGP…QPGA). A compositionally biased stretch (basic and acidic residues) spans 744–753 (KGEKGTKGPK). A compositionally biased stretch (low complexity) spans 755–771 (ENGIVGPTGPVGAAGPS). Residues 781–790 (GSRGDGGPPG) are compositionally biased toward gly residues. Positions 783–785 (RGD) match the Cell attachment site motif. Over residues 792-801 (TGFPGAAGRT) the composition is skewed to low complexity. A Cell attachment site motif is present at residues 828–830 (RGD). Low complexity-rich tracts occupy residues 855–882 (SGEP…LGLP), 891–927 (PGIA…NGAP), 957–978 (PGNI…VGPA), and 987–1007 (PGPA…PSGP). Residues 1011 to 1013 (RGD) carry the Cell attachment site motif. A compositionally biased stretch (basic and acidic residues) spans 1011–1022 (RGDKGEPGDKGA). The segment covering 1095-1107 (AGPPGPPGPPGPP) has biased composition (pro residues). Residues 1108–1120 (GVSGGGYDFGFEG) are compositionally biased toward gly residues. The propeptide at 1126–1372 (DQPRSQPSLR…RVEVGPVCFK (247 aa)) is C-terminal propeptide. The region spanning 1139–1372 (YEVDATLKSL…RVEVGPVCFK (234 aa)) is the Fibrillar collagen NC1 domain. Cystine bridges form between cysteine 1169/cysteine 1201, cysteine 1209/cysteine 1370, and cysteine 1278/cysteine 1323. Residues aspartate 1187, asparagine 1189, glutamine 1190, cysteine 1192, and aspartate 1195 each coordinate Ca(2+). Residue asparagine 1273 is glycosylated (N-linked (GlcNAc...) asparagine).

This sequence belongs to the fibrillar collagen family. Trimers of one alpha 2(I) and two alpha 1(I) chains. Interacts (via C-terminus) with TMEM131 (via PapD-L domain); the interaction is direct and is involved in assembly and TRAPPIII ER-to-Golgi transport complex-dependent secretion of collagen. In terms of processing, proline residues at the third position of the tripeptide repeating unit (G-X-P) are hydroxylated in some or all of the chains. Proline residues at the second position of the tripeptide repeating unit (G-P-X) are hydroxylated in some of the chains. As to expression, forms the fibrils of tendon, ligaments and bones. In bones the fibrils are mineralized with calcium hydroxyapatite. Expressed in flagella of epididymal sperm.

It is found in the secreted. The protein resides in the extracellular space. It localises to the extracellular matrix. Its function is as follows. Type I collagen is a member of group I collagen (fibrillar forming collagen). This Rattus norvegicus (Rat) protein is Collagen alpha-2(I) chain (Col1a2).